A 156-amino-acid chain; its full sequence is MPVLDIEDFADALPQYAAVVGLDPGEKTIGVAVSDVTRTVASPLALIEKTKFSKDAEQLFKLMDSRGAVAIVIGLPMNMDGTEGVRCQSNRALGRNLLRLKPDLPITFWDERLSTAAVTRVLIDEHDISRKRRDEVVDKMAAGWILQGALERLRGL.

Belongs to the YqgF nuclease family.

The protein localises to the cytoplasm. Its function is as follows. Could be a nuclease involved in processing of the 5'-end of pre-16S rRNA. The sequence is that of Putative pre-16S rRNA nuclease from Caulobacter vibrioides (strain ATCC 19089 / CIP 103742 / CB 15) (Caulobacter crescentus).